The following is a 472-amino-acid chain: Membrane-bound acylglycerophosphatidylinositol O-acyltransferase MBOAT7 (472 aa).

Topologically, residues 1-5 are cytoplasmic; that stretch reads MSPEE. Residues 6-22 form a helical membrane-spanning segment; sequence WTYLVVLLISIPIGFLF. Residues 23-33 are Lumenal-facing; that stretch reads KKAGPGLKRWG. The helical transmembrane segment at 34-57 threads the bilayer; sequence AAAVGLGLTLFTCGPHTLHSLVTI. Topologically, residues 58–73 are cytoplasmic; it reads LGTWALIQAQPCSCHA. The chain crosses the membrane as a helical span at residues 74–93; that stretch reads LALAWTFSYLLFFRALSLLG. Topologically, residues 94–194 are lumenal; the sequence is LPTPTPFTNA…VPSLRPLLRR (101 aa). A helical transmembrane segment spans residues 195 to 212; sequence AWPAPLFGLLFLLSSHLF. Topologically, residues 213-231 are cytoplasmic; it reads PLEAVREDAFYARPLPARL. Residues 232–261 traverse the membrane as a helical segment; sequence FYMIPVFFAFRMRFYVAWIAAECGCIAAGF. The Lumenal segment spans residues 262–426; sequence GAYPVAAKAR…LSLRDTLRYW (165 aa). An N-linked (GlcNAc...) asparagine glycan is attached at N321. A helical membrane pass occupies residues 427 to 447; it reads ASVYFCVHVLALAALGLGLAL. The Cytoplasmic portion of the chain corresponds to 448 to 472; that stretch reads GRGGPGRRKSGAPAPSPASGKLREE. The interval 450–472 is disordered; that stretch reads GGPGRRKSGAPAPSPASGKLREE.

The protein belongs to the membrane-bound acyltransferase family. Interacts with SPTSSA; the interaction facilitates MBOAT7 location to mitochondria-associated membranes (MAMs).

It is found in the endoplasmic reticulum membrane. The enzyme catalyses a 1-acyl-sn-glycero-3-phospho-(1D-myo-inositol) + an acyl-CoA = a 1,2-diacyl-sn-glycero-3-phospho-(1D-myo-inositol) + CoA. It catalyses the reaction a 1-acyl-sn-glycero-3-phospho-(1D-myo-inositol) + (5Z,8Z,11Z,14Z)-eicosatetraenoyl-CoA = a 1-acyl-2-(5Z,8Z,11Z,14Z-eicosatetraenoyl)-sn-glycero-3-phospho-(1D-myo-inositol) + CoA. The catalysed reaction is (5Z,8Z,11Z,14Z)-eicosatetraenoyl-CoA + 1-hexadecanoyl-sn-glycero-3-phosphocholine = 1-hexadecanoyl-2-(5Z,8Z,11Z,14Z-eicosatetraenoyl)-sn-glycero-3-phosphocholine + CoA. It carries out the reaction 1-octadecanoyl-sn-glycero-3-phospho-(1D-myo-inositol) + (5Z,8Z,11Z,14Z)-eicosatetraenoyl-CoA = 1-octadecanoyl-2-(5Z,8Z,11Z,14Z-eicosatetraenoyl)-sn-glycero-3-phospho-(1D-myo-inositol) + CoA. It participates in lipid metabolism; phospholipid metabolism. Its function is as follows. Acyltransferase which catalyzes the transfer of an acyl group from an acyl-CoA to a lysophosphatidylinositol (1-acylglycerophosphatidylinositol or LPI) leading to the production of a phosphatidylinositol (1,2-diacyl-sn-glycero-3-phosphoinositol or PI) and participates in the reacylation step of the phospholipid remodeling pathway also known as the Lands cycle. Prefers arachidonoyl-CoA as the acyl donor, thus contributing to the regulation of free levels arachidonic acid in cell. In liver, participates in the regulation of triglyceride metabolism through the phosphatidylinositol acyl-chain remodeling regulation. In Bos taurus (Bovine), this protein is Membrane-bound acylglycerophosphatidylinositol O-acyltransferase MBOAT7 (MBOAT7).